The primary structure comprises 2531 residues: Mediator of RNA polymerase II transcription subunit 12 (2531 aa).

Disordered regions lie at residues 1–41 (MLSM…VKHG), 204–283 (QNHD…GSVM), 584–604 (VSRR…PKQD), and 742–762 (TTAT…THGF). Low complexity predominate over residues 210–247 (SSNGTTSGSLTAAGNGPASNGSTGTSSINSVTGSSAST). A compositionally biased stretch (basic and acidic residues) spans 586 to 604 (RRREEDQVEPRPPYEPKQD). A Phosphothreonine modification is found at Thr-745. 2 positions are modified to phosphoserine: Ser-748 and Ser-781. A compositionally biased stretch (pro residues) spans 748–757 (SPPPPAPPPT). Over residues 796–805 (EKGQQHEAPD) the composition is skewed to basic and acidic residues. The disordered stretch occupies residues 796-824 (EKGQQHEAPDSPKIGPPGDGETNPGGSIS). A phosphoserine mark is found at Ser-806 and Ser-1356. Thr-1360 bears the Phosphothreonine mark. 2 stretches are compositionally biased toward polar residues: residues 1585 to 1595 (VSKSDCNSSGS) and 1901 to 1910 (TPSSVDQSPS). 4 disordered regions span residues 1585-1608 (VSKS…CHSS), 1898-2092 (KADT…NQYA), 2114-2218 (QALS…GMAP), and 2469-2508 (MGGG…QQQT). The segment covering 1919-1933 (GRGKGTTTRKRKPKN) has biased composition (basic residues). Composition is skewed to low complexity over residues 1938–2038 (PVVN…QQLN) and 2045–2055 (QPNPQMNFMQQ). The segment covering 2056 to 2066 (GPGGGGAGPQG) has biased composition (gly residues). Low complexity-rich tracts occupy residues 2067–2080 (MPGQ…APQQ), 2121–2132 (RQRQPFQQQAQQ), and 2139–2205 (NPMQ…QQQQ). A compositionally biased stretch (gly residues) spans 2469-2496 (MGGGAGGGMGAGPQQGGGAVGGGAGGGM). The segment covering 2497-2507 (VPQQQSMNQQQ) has biased composition (low complexity).

This sequence belongs to the Mediator complex subunit 12 family. Component of the Cdk8 module of the Mediator complex, composed of CycC, Cdk8, kto and skd.

Its subcellular location is the nucleus. Component of the Mediator complex, a coactivator involved in regulated gene transcription of nearly all RNA polymerase II-dependent genes. Mediator functions as a bridge to convey information from gene-specific regulatory proteins to the basal RNA polymerase II transcription machinery. Mediator is recruited to promoters by direct interactions with regulatory proteins and serves as a scaffold for the assembly of a functional preinitiation complex with RNA polymerase II and the general transcription factors. Required for leg and eye development and macrochaete specification or differentiation. This is Mediator of RNA polymerase II transcription subunit 12 (kto) from Drosophila melanogaster (Fruit fly).